The sequence spans 130 residues: MAKLIKKISLRKGKRRIPKGVIHIQASFNNTIVTVTDIRGQVVFWSSAGACGFKGAKKSTPFAAQTAAENAIRVLIDQGMKQAEVMISGPGPGRDTALRAIRRSGVILNFVRDVTPMPHNGCRPPKKRRV.

Belongs to the universal ribosomal protein uS11 family. Part of the 30S ribosomal subunit.

Its subcellular location is the plastid. It localises to the chloroplast. The sequence is that of Small ribosomal subunit protein uS11c from Physcomitrium patens (Spreading-leaved earth moss).